We begin with the raw amino-acid sequence, 341 residues long: MILLENVKKIYKAKSGDVTAVDNANLKIDKGEIFGVIGYSGAGKSSLIRLFNQLEKPTSGQITIANRVISAITGSELRKARQEIGMIFQHFNLLWSRTVRENIEFPLEIAGVDKAKRRKRVDELIHLVGLEGRGDAYPSQLSGGQKQRVGIARALANNPQVLLCDEATSALDPETTDQILDLLLDINKRLGLTIVLITHEMHVIRKICNRVAVMEKGKIVETGPVLDVFRNPQQDITKRFVQQLTDSEDTNETIESLIEKYPDGKVIRLQFIGEAVERPVLQRLMQRSDIEVSILQGNIAQTNNGSYGSLVVHLNGEETAIQQAIEGIHQDQVELEVIAHG.

In terms of domain architecture, ABC transporter spans 2-241 (ILLENVKKIY…PQQDITKRFV (240 aa)). 38–45 (GYSGAGKS) contributes to the ATP binding site.

This sequence belongs to the ABC transporter superfamily. Methionine importer (TC 3.A.1.24) family. As to quaternary structure, the complex is composed of two ATP-binding proteins (MetN), two transmembrane proteins (MetI) and a solute-binding protein (MetQ).

Its subcellular location is the cell membrane. It catalyses the reaction L-methionine(out) + ATP + H2O = L-methionine(in) + ADP + phosphate + H(+). The catalysed reaction is D-methionine(out) + ATP + H2O = D-methionine(in) + ADP + phosphate + H(+). In terms of biological role, part of the ABC transporter complex MetNIQ involved in methionine import. Responsible for energy coupling to the transport system. The sequence is that of Methionine import ATP-binding protein MetN 3 from Bacillus anthracis.